Here is a 127-residue protein sequence, read N- to C-terminus: Mitochondrial pyruvate carrier 2 (127 aa).

Topologically, residues 2 to 40 (SAAGARGLRATYHRLLDKVELMLPEKLRPLYNHPAGPRT) are mitochondrial matrix. The chain crosses the membrane as a helical span at residues 41–61 (VFFWAPIMKRGLVCAGLADMA). Residues 62 to 72 (RPAEKLSTAQS) lie on the Mitochondrial intermembrane side of the membrane. A helical transmembrane segment spans residues 73–90 (AVLMATGFIWSRYSLVII). The Mitochondrial matrix segment spans residues 91–95 (PKNWS). Residues 96 to 115 (LFAVNFFVGAAGASQLFRIW) form a helical membrane-spanning segment. The Mitochondrial intermembrane portion of the chain corresponds to 116–127 (RYNQELKAKAHK).

Belongs to the mitochondrial pyruvate carrier (MPC) (TC 2.A.105) family. In terms of assembly, homodimer. Homooligomer. Forms heterodimers with MPC1 and MPC1L. The heterodimer is the more stable and dominant form.

It localises to the mitochondrion inner membrane. The enzyme catalyses pyruvate(out) + H(+)(out) = pyruvate(in) + H(+)(in). Mediates the uptake of pyruvate into mitochondria. This Pongo abelii (Sumatran orangutan) protein is Mitochondrial pyruvate carrier 2 (MPC2).